The sequence spans 201 residues: Dephospho-CoA kinase (201 aa).

Positions 3–201 (IIGLTGGMAA…ALLHRLREAS (199 aa)) constitute a DPCK domain. 11–16 (AAGKST) serves as a coordination point for ATP.

Belongs to the CoaE family.

Its subcellular location is the cytoplasm. The enzyme catalyses 3'-dephospho-CoA + ATP = ADP + CoA + H(+). The protein operates within cofactor biosynthesis; coenzyme A biosynthesis; CoA from (R)-pantothenate: step 5/5. Catalyzes the phosphorylation of the 3'-hydroxyl group of dephosphocoenzyme A to form coenzyme A. The polypeptide is Dephospho-CoA kinase (Gluconobacter oxydans (strain 621H) (Gluconobacter suboxydans)).